The sequence spans 136 residues: Large-conductance mechanosensitive channel (136 aa).

The next 4 membrane-spanning stretches (helical) occupy residues 9–29 (AFAS…GAAF), 32–52 (IVSS…LGGV), 54–74 (FSDL…VVIA), and 79–99 (IQTV…LKAI).

It belongs to the MscL family. In terms of assembly, homopentamer.

It is found in the cell inner membrane. In terms of biological role, channel that opens in response to stretch forces in the membrane lipid bilayer. May participate in the regulation of osmotic pressure changes within the cell. This chain is Large-conductance mechanosensitive channel, found in Shewanella oneidensis (strain ATCC 700550 / JCM 31522 / CIP 106686 / LMG 19005 / NCIMB 14063 / MR-1).